A 119-amino-acid polypeptide reads, in one-letter code: Integration host factor subunit alpha (119 aa).

The disordered stretch occupies residues isoleucine 96 to glutamate 119.

The protein belongs to the bacterial histone-like protein family. As to quaternary structure, heterodimer of an alpha and a beta chain.

Its function is as follows. This protein is one of the two subunits of integration host factor, a specific DNA-binding protein that functions in genetic recombination as well as in transcriptional and translational control. The protein is Integration host factor subunit alpha of Bradyrhizobium sp. (strain BTAi1 / ATCC BAA-1182).